Here is a 192-residue protein sequence, read N- to C-terminus: Peptidyl-tRNA hydrolase (192 aa).

Tyr18 contributes to the tRNA binding site. The active-site Proton acceptor is the His23. TRNA-binding residues include Phe69, Asn71, and Asn117.

It belongs to the PTH family. Monomer.

The protein localises to the cytoplasm. The enzyme catalyses an N-acyl-L-alpha-aminoacyl-tRNA + H2O = an N-acyl-L-amino acid + a tRNA + H(+). Functionally, hydrolyzes ribosome-free peptidyl-tRNAs (with 1 or more amino acids incorporated), which drop off the ribosome during protein synthesis, or as a result of ribosome stalling. Catalyzes the release of premature peptidyl moieties from peptidyl-tRNA molecules trapped in stalled 50S ribosomal subunits, and thus maintains levels of free tRNAs and 50S ribosomes. The polypeptide is Peptidyl-tRNA hydrolase (Neisseria meningitidis serogroup B (strain ATCC BAA-335 / MC58)).